A 314-amino-acid polypeptide reads, in one-letter code: Signal peptidase I (314 aa).

Residues 5-25 traverse the membrane as a helical segment; it reads LTIFLLISTLVTGIFWSFYCI. Residues 26 to 63 are Cytoplasmic-facing; it reads KSFKNYLINKKIINNNNFHQEKIEKSKNKTYFLKSLAS. Residues 64 to 84 form a helical membrane-spanning segment; sequence FFPIFLAIFIIRSFIYEPFQI. Over 85–314 the chain is Extracellular; that stretch reads PSGSMMPTLL…IRINRIGSIH (230 aa). Residues serine 88 and lysine 143 contribute to the active site.

It belongs to the peptidase S26 family.

It localises to the cell membrane. It carries out the reaction Cleavage of hydrophobic, N-terminal signal or leader sequences from secreted and periplasmic proteins.. This is Signal peptidase I (lepB) from Buchnera aphidicola subsp. Acyrthosiphon pisum (strain APS) (Acyrthosiphon pisum symbiotic bacterium).